A 211-amino-acid polypeptide reads, in one-letter code: High frequency lysogenization protein HflD homolog (211 aa).

It belongs to the HflD family.

The protein resides in the cytoplasm. It is found in the cell membrane. The protein is High frequency lysogenization protein HflD homolog of Buchnera aphidicola subsp. Acyrthosiphon pisum (strain 5A).